A 1485-amino-acid polypeptide reads, in one-letter code: Cystic fibrosis transmembrane conductance regulator (1485 aa).

Residues 1-78 (MQKTPLEKAS…KLINALKRCF (78 aa)) are Cytoplasmic-facing. The chain crosses the membrane as a helical span at residues 79–99 (FWKFLFYGILLYLGEVTKAVQ). In terms of domain architecture, ABC transmembrane type-1 1 spans 82-366 (FLFYGILLYL…WAVQTWYDSL (285 aa)). Topologically, residues 100 to 123 (PLLLGRIIASYDRDNEHERSIAYY) are extracellular. Residues 124 to 147 (LAIGLCLLFVVRMLLLHPAIFGLH) form a helical membrane-spanning segment. The Cytoplasmic portion of the chain corresponds to 148-196 (HIGMQMRIAMFSLIYKKTLKLSSKVLDKISTGQLVSLLSNNLNKFDEGL). A helical transmembrane segment spans residues 197-217 (ALAHFVWIAPLQVLLLMGLLW). Topologically, residues 218-223 (DLLQAS) are extracellular. Residues 224–244 (AFCGLGFLIILSLFQARLGRM) form a helical membrane-spanning segment. Over 245–299 (MMKYKDKRAGKINERLVITSQIIENIQSVKAYCWENAMEKIIETIRETELKLTRK) the chain is Cytoplasmic. The helical transmembrane segment at 300–320 (AAYVRYFNSSAFFFSGFFVVF) threads the bilayer. The Extracellular segment spans residues 321–340 (LSIVPHLLLDGISLRKIFTT). A helical membrane pass occupies residues 341 to 359 (ISFSIVLRMAVTRQFPWAV). Residues 360 to 860 (QTWYDSLGVI…YLRFLTAHKN (501 aa)) lie on the Cytoplasmic side of the membrane. ATP-binding positions include Trp-402, Ser-435, 459–466 (GSTGAGKT), and Gln-494. Residues 422–647 (ISNEDPSAFF…RPEFSSHLIG (226 aa)) enclose the ABC transporter 1 domain. Residues 652-833 (NAERRNSIIT…EEINEEDLKE (182 aa)) are disordered R region. A compositionally biased stretch (polar residues) spans 750–760 (PRSNFLNTGPT). A helical transmembrane segment spans residues 861–881 (FIFILVFCLVIFFVEVAASSA). Residues 880-1163 (SAWLWIIKRN…ASIDVDSLMR (284 aa)) form the ABC transmembrane type-1 2 domain. Residues 882-923 (WLWIIKRNAPAINMTSNENVSEVSDTLSVIVTHTSFYYVFYI) are Extracellular-facing. 2 N-linked (GlcNAc...) asparagine glycosylation sites follow: Asn-894 and Asn-900. Residues 924-944 (YVGVADSLLALGIFRGLPLVH) traverse the membrane as a discontinuously helical segment. Over 945–995 (SLISVSKVLHKKMLHAILHAPMSTFNTMRAGRILNRFSKDTAILDDILPLS) the chain is Cytoplasmic. Residues 996 to 1016 (IFDLTQLVLIVIGAITVVSLL) form a helical membrane-spanning segment. The Extracellular portion of the chain corresponds to 1017-1018 (EP). A helical membrane pass occupies residues 1019–1039 (YIFLATVPVIVAFILLRSYFL). The Cytoplasmic portion of the chain corresponds to 1040 to 1100 (HTSQQLKQLE…TANWFLYLST (61 aa)). A helical transmembrane segment spans residues 1101-1121 (LRWFQMTIEMIFVIFFIAVSF). The Extracellular portion of the chain corresponds to 1122–1135 (ISIATSGAGEEKVG). A helical membrane pass occupies residues 1136-1156 (IVLTLAMNIMNTLQWAVNASI). The Cytoplasmic portion of the chain corresponds to 1157–1485 (DVDSLMRSVS…TEEEVQDTRL (329 aa)). The region spanning 1213 to 1446 (MTVKNLSANY…KSFFKQAISH (234 aa)) is the ABC transporter 2 domain. ATP-binding positions include Tyr-1222 and 1247 to 1254 (GRTGSGKS). Residues 1458–1485 (RNSSKRKSRPQISALQEETEEEVQDTRL) form a disordered region. The span at 1474-1485 (EETEEEVQDTRL) shows a compositional bias: acidic residues. Residues 1483-1485 (TRL) carry the PDZ-binding motif.

This sequence belongs to the ABC transporter superfamily. ABCC family. CFTR transporter (TC 3.A.1.202) subfamily. Monomer; does not require oligomerization for channel activity. May form oligomers in the membrane. Phosphorylated; cAMP treatment promotes phosphorylation and activates the channel. Dephosphorylation decreases the ATPase activity (in vitro). Phosphorylation at PKA sites activates the channel. Phosphorylation at PKC sites enhances the response to phosphorylation by PKA.

The protein resides in the apical cell membrane. It localises to the early endosome membrane. It is found in the cell membrane. The protein localises to the recycling endosome membrane. Its subcellular location is the endoplasmic reticulum membrane. It carries out the reaction ATP + H2O + closed Cl(-) channel = ADP + phosphate + open Cl(-) channel.. The catalysed reaction is chloride(in) = chloride(out). The enzyme catalyses hydrogencarbonate(in) = hydrogencarbonate(out). It catalyses the reaction ATP + H2O = ADP + phosphate + H(+). Its function is as follows. Epithelial ion channel that plays an important role in the regulation of epithelial ion and water transport and fluid homeostasis. Mediates the transport of chloride ions across the cell membrane. Possesses an intrinsic ATPase activity and utilizes ATP to gate its channel; the passive flow of anions through the channel is gated by cycles of ATP binding and hydrolysis by the ATP-binding domains. The ion channel is also permeable to HCO(3)(-); selectivity depends on the extracellular chloride concentration. Exerts its function also by modulating the activity of other ion channels and transporters. Contributes to the regulation of the pH and the ion content of the epithelial fluid layer. This chain is Cystic fibrosis transmembrane conductance regulator, found in Xenopus laevis (African clawed frog).